We begin with the raw amino-acid sequence, 132 residues long: Small ribosomal subunit protein uS8 (132 aa).

This sequence belongs to the universal ribosomal protein uS8 family. In terms of assembly, part of the 30S ribosomal subunit. Contacts proteins S5 and S12.

Functionally, one of the primary rRNA binding proteins, it binds directly to 16S rRNA central domain where it helps coordinate assembly of the platform of the 30S subunit. In Rickettsia conorii (strain ATCC VR-613 / Malish 7), this protein is Small ribosomal subunit protein uS8.